The sequence spans 805 residues: Leucine--tRNA ligase (805 aa).

The 'HIGH' region signature appears at 40–51 (PYPSGSGLHVGH). The 'KMSKS' region signature appears at 576 to 580 (KMSKS). An ATP-binding site is contributed by Lys579.

Belongs to the class-I aminoacyl-tRNA synthetase family.

It localises to the cytoplasm. The enzyme catalyses tRNA(Leu) + L-leucine + ATP = L-leucyl-tRNA(Leu) + AMP + diphosphate. The sequence is that of Leucine--tRNA ligase from Chlorobium chlorochromatii (strain CaD3).